The primary structure comprises 507 residues: Glycerol kinase (507 aa).

Threonine 14 contributes to the ADP binding site. 3 residues coordinate ATP: threonine 14, threonine 15, and serine 16. Position 14 (threonine 14) interacts with sn-glycerol 3-phosphate. Position 18 (arginine 18) interacts with ADP. Residues arginine 84, glutamate 85, tyrosine 136, and aspartate 246 each coordinate sn-glycerol 3-phosphate. Glycerol-binding residues include arginine 84, glutamate 85, tyrosine 136, aspartate 246, and glutamine 247. Residues threonine 268 and glycine 311 each contribute to the ADP site. 4 residues coordinate ATP: threonine 268, glycine 311, glutamine 315, and glycine 412. Glycine 412 and asparagine 416 together coordinate ADP.

It belongs to the FGGY kinase family.

It carries out the reaction glycerol + ATP = sn-glycerol 3-phosphate + ADP + H(+). It participates in polyol metabolism; glycerol degradation via glycerol kinase pathway; sn-glycerol 3-phosphate from glycerol: step 1/1. Its activity is regulated as follows. Inhibited by fructose 1,6-bisphosphate (FBP). Key enzyme in the regulation of glycerol uptake and metabolism. Catalyzes the phosphorylation of glycerol to yield sn-glycerol 3-phosphate. The polypeptide is Glycerol kinase (Vibrio atlanticus (strain LGP32) (Vibrio splendidus (strain Mel32))).